The primary structure comprises 1403 residues: Centrosomal protein of 162 kDa (1403 aa).

The interval 20–46 is disordered; that stretch reads LSDDSFENSNKTPRQPNEDNKEMKKKD. A compositionally biased stretch (basic and acidic residues) spans 35 to 46; the sequence is PNEDNKEMKKKD. Phosphoserine occurs at positions 160 and 163. Disordered regions lie at residues 169-243, 256-292, 306-348, and 453-606; these read LHRY…MLAN, VGLSSQEKATPKAKAPPEITDDGPAETGVPYGQSSGD, SLGD…ESDL, and NPSL…GGNR. Acidic residues predominate over residues 178–208; the sequence is PAEDGCENESEQEELPETYSDDFEDAEDADD. The span at 210–238 shows a compositional bias: basic and acidic residues; the sequence is LITKDEETHPKENSESGKDSFPKQEEEKT. A compositionally biased stretch (basic residues) spans 485-500; it reads PCKKARSTPSLPKRKP. Basic and acidic residues-rich tracts occupy residues 526–536 and 571–585; these read LEKKTSKDNTK and PHREGSPATPKRPED. Positions 614-1124 form a coiled coil; sequence KRAQDAEEKW…QKERRMMLSR (511 aa). Residues 1126-1147 form a disordered region; the sequence is IPRSREETAAKRLKKDPNRGHG. Residues 1128–1144 show a composition bias toward basic and acidic residues; sequence RSREETAAKRLKKDPNR. Residues 1174 to 1386 are a coiled coil; the sequence is EENYRLRSEL…LDVLRELHRQ (213 aa).

The protein belongs to the CEP162 family. In terms of assembly, interacts with CPNE4. Interacts with alpha-tubulin. Interacts with CEP290.

It localises to the cytoplasm. The protein localises to the cytoskeleton. It is found in the microtubule organizing center. The protein resides in the centrosome. Its subcellular location is the centriole. It localises to the spindle. The protein localises to the nucleus. Functionally, required to promote assembly of the transition zone in primary cilia. Acts by specifically recognizing and binding the axonemal microtubule. Localizes to the distal ends of centrioles before ciliogenesis and directly binds to axonemal microtubule, thereby promoting and restricting transition zone formation specifically at the cilia base. Required to mediate CEP290 association with microtubules. The protein is Centrosomal protein of 162 kDa (Cep162) of Mus musculus (Mouse).